A 59-amino-acid chain; its full sequence is Large ribosomal subunit protein bL33 (59 aa).

The protein belongs to the bacterial ribosomal protein bL33 family.

This chain is Large ribosomal subunit protein bL33, found in Borreliella afzelii (strain PKo) (Borrelia afzelii).